A 506-amino-acid polypeptide reads, in one-letter code: Cytochrome P450 6a8 (506 aa).

C451 lines the heme pocket.

It belongs to the cytochrome P450 family. Heme serves as cofactor.

Its subcellular location is the endoplasmic reticulum membrane. The protein resides in the microsome membrane. Functionally, involved in the metabolism of insect hormones and in the breakdown of synthetic insecticides. The protein is Cytochrome P450 6a8 (Cyp6a8) of Drosophila melanogaster (Fruit fly).